The chain runs to 597 residues: NADH-quinone oxidoreductase subunit C/D (597 aa).

The interval Met1–Glu187 is NADH dehydrogenase I subunit C. An NADH dehydrogenase I subunit D region spans residues Asp211–Arg597.

This sequence in the N-terminal section; belongs to the complex I 30 kDa subunit family. In the C-terminal section; belongs to the complex I 49 kDa subunit family. In terms of assembly, NDH-1 is composed of 13 different subunits. Subunits NuoB, CD, E, F, and G constitute the peripheral sector of the complex.

Its subcellular location is the cell inner membrane. The enzyme catalyses a quinone + NADH + 5 H(+)(in) = a quinol + NAD(+) + 4 H(+)(out). In terms of biological role, NDH-1 shuttles electrons from NADH, via FMN and iron-sulfur (Fe-S) centers, to quinones in the respiratory chain. The immediate electron acceptor for the enzyme in this species is believed to be ubiquinone. Couples the redox reaction to proton translocation (for every two electrons transferred, four hydrogen ions are translocated across the cytoplasmic membrane), and thus conserves the redox energy in a proton gradient. In Buchnera aphidicola subsp. Schizaphis graminum (strain Sg), this protein is NADH-quinone oxidoreductase subunit C/D.